The following is a 261-amino-acid chain: Eukaryotic translation initiation factor 3 subunit G (261 aa).

Residues 156-180 (QDADSKNALGLRGDGRQMERNRSDE) form a disordered region. Over residues 168–180 (GDGRQMERNRSDE) the composition is skewed to basic and acidic residues. Positions 181–259 (NTCRVTNLPQ…MVLKVEWTRP (79 aa)) constitute an RRM domain.

It belongs to the eIF-3 subunit G family. As to quaternary structure, component of the eukaryotic translation initiation factor 3 (eIF-3) complex.

The protein resides in the cytoplasm. RNA-binding component of the eukaryotic translation initiation factor 3 (eIF-3) complex, which is involved in protein synthesis of a specialized repertoire of mRNAs and, together with other initiation factors, stimulates binding of mRNA and methionyl-tRNAi to the 40S ribosome. The eIF-3 complex specifically targets and initiates translation of a subset of mRNAs involved in cell proliferation. This subunit can bind 18S rRNA. The protein is Eukaryotic translation initiation factor 3 subunit G of Caenorhabditis briggsae.